The primary structure comprises 466 residues: UDP-N-acetylmuramoylalanine--D-glutamate ligase (466 aa).

127-133 (GSNGKST) serves as a coordination point for ATP.

This sequence belongs to the MurCDEF family.

The protein resides in the cytoplasm. It carries out the reaction UDP-N-acetyl-alpha-D-muramoyl-L-alanine + D-glutamate + ATP = UDP-N-acetyl-alpha-D-muramoyl-L-alanyl-D-glutamate + ADP + phosphate + H(+). It functions in the pathway cell wall biogenesis; peptidoglycan biosynthesis. Functionally, cell wall formation. Catalyzes the addition of glutamate to the nucleotide precursor UDP-N-acetylmuramoyl-L-alanine (UMA). This Ruegeria pomeroyi (strain ATCC 700808 / DSM 15171 / DSS-3) (Silicibacter pomeroyi) protein is UDP-N-acetylmuramoylalanine--D-glutamate ligase.